A 472-amino-acid polypeptide reads, in one-letter code: Eukaryotic translation initiation factor 2 subunit 3, Y-linked (472 aa).

A2 is modified (N-acetylalanine). S16 is modified (phosphoserine). The tr-type G domain maps to 39–247; the sequence is QATINIGTIG…YIVKKIPVPL (209 aa). A G1 region spans residues 48 to 55; that stretch reads GHVAHGKS. 51-56 lines the GTP pocket; that stretch reads AHGKST. Residues 76 to 80 are G2; that stretch reads NITIK. The interval 134–137 is G3; the sequence is DCPG. Residues 190-193 and 225-227 contribute to the GTP site; these read NKID and SAQ. A G4 region spans residues 190–193; it reads NKID. Residues 225–227 are G5; sequence SAQ.

The protein belongs to the TRAFAC class translation factor GTPase superfamily. Classic translation factor GTPase family. EIF2G subfamily. EIF2 is a heterotrimer composed of an alpha (EIF2S1), a beta (EIF2S2) and a gamma (Eif2s3x and Eif2s3y) chain. eIF2 is member of the 43S pre-initiation complex (43S PIC). In terms of tissue distribution, widely expressed in males.

The catalysed reaction is GTP + H2O = GDP + phosphate + H(+). Functionally, member of the eIF2 complex that functions in the early steps of protein synthesis by forming a ternary complex with GTP and initiator tRNA. This complex binds to a 40S ribosomal subunit, followed by mRNA binding to form the 43S pre-initiation complex (43S PIC). Junction of the 60S ribosomal subunit to form the 80S initiation complex is preceded by hydrolysis of the GTP bound to eIF2 and release of an eIF2-GDP binary complex. In order for eIF2 to recycle and catalyze another round of initiation, the GDP bound to eIF2 must exchange with GTP by way of a reaction catalyzed by eIF-2B. Along with its paralog on chromosome X, may contribute to spermatogenesis up to the round spermatid stage. This chain is Eukaryotic translation initiation factor 2 subunit 3, Y-linked (Eif2s3y), found in Rattus norvegicus (Rat).